The following is a 648-amino-acid chain: Cell surface glycoprotein MUC18 (648 aa).

The N-terminal stretch at 1 to 23 (MGLPKLVCVFLFAACCCCRRAAG) is a signal peptide. Ig-like V-type domains lie at 24–131 (VPGE…HYVE) and 141–244 (PTIQ…KEVT). Topologically, residues 24-563 (VPGEEKQPVP…LPQPESKGVV (540 aa)) are extracellular. Cystine bridges form between C50/C118, C163/C225, C274/C322, C367/C409, and C454/C501. N58 is a glycosylation site (N-linked (GlcNAc...) asparagine). 3 Ig-like C2-type domains span residues 246-332 (PVFY…TTIT), 337-426 (PLEL…QLVS), and 432-512 (SPWM…SNTT). Residues 281 to 304 (QPHFTINKKDPSTGEMEEESTDEN) are disordered. Residue N510 is glycosylated (N-linked (GlcNAc...) asparagine). A compositionally biased stretch (polar residues) spans 532 to 549 (TGLSTLTVSPHTRANSTS). Residues 532 to 554 (TGLSTLTVSPHTRANSTSTEKKL) form a disordered region. The chain crosses the membrane as a helical span at residues 564 to 584 (IVAVIVCTLVLAVLGAALYFF). Topologically, residues 585-648 (YKKGKLPCGR…QGEKYIDLRH (64 aa)) are cytoplasmic. Residues S608 and S616 each carry the phosphoserine modification. Residues 625-648 (LLQGSNGDKRAPGDQGEKYIDLRH) form a disordered region. Positions 631–648 (GDKRAPGDQGEKYIDLRH) are enriched in basic and acidic residues.

In terms of tissue distribution, detected in melanoma cell lines.

The protein resides in the membrane. In terms of biological role, plays a role in cell adhesion, and in cohesion of the endothelial monolayer at intercellular junctions in vascular tissue. Its expression may allow melanoma cells to interact with cellular elements of the vascular system, thereby enhancing hematogeneous tumor spread. Could be an adhesion molecule active in neural crest cells during embryonic development. Acts as a surface receptor that triggers tyrosine phosphorylation of FYN and PTK2/FAK1, and a transient increase in the intracellular calcium concentration. The chain is Cell surface glycoprotein MUC18 (Mcam) from Mus musculus (Mouse).